We begin with the raw amino-acid sequence, 1266 residues long: Formin-like protein 13 (1266 aa).

A Phosphatase tensin-type domain is found at 9–193 (YRKPPDGLLE…QYVSRRNLVS (185 aa)). The Phosphocysteine intermediate role is filled by cysteine 126. A C2 tensin-type domain is found at 199-337 (DRALTMDCVI…FRVELLFSDM (139 aa)). Disordered regions lie at residues 497-568 (KPLV…LQHS), 597-825 (KNLI…GKGR), 881-902 (SASAPEQAGKSRLDSSRGPKPE), and 1210-1266 (QLEA…RTAP). A compositionally biased stretch (pro residues) spans 529–538 (PPTPSPPHPV). Over residues 617 to 644 (EPSSKTTNSLLLSPQASPATPTNPSKTV) the composition is skewed to polar residues. Pro residues-rich tracts occupy residues 686 to 698 (LPRPPPPPPPPPM), 706 to 742 (VPPPPPPAPPAPPTPIVHTSSPPPPPPPPPPPAPPTP), 754 to 781 (PPAPPAPPRLPTHSASPPPPTAPPPPPL), and 806 to 815 (PNVPPTPALP). The region spanning 829-1226 (VNLKNSPAKK…KNAAEKEKPK (398 aa)) is the FH2 domain. Composition is skewed to basic and acidic residues over residues 889–902 (GKSRLDSSRGPKPE), 1210–1248 (QLEAEAKKNAAEKEKPKTGGLDTEIKKPLNEEVKEEKTK), and 1255–1266 (EMSDRLKERTAP).

This sequence belongs to the formin-like family. Class-II subfamily.

This is Formin-like protein 13 (FH13) from Arabidopsis thaliana (Mouse-ear cress).